We begin with the raw amino-acid sequence, 311 residues long: Ribonuclease HIII (311 aa).

Positions 95–311 (MSIVGSDEVG…NTEKALRLLR (217 aa)) constitute an RNase H type-2 domain. A divalent metal cation contacts are provided by aspartate 101, glutamate 102, and aspartate 206.

This sequence belongs to the RNase HII family. RnhC subfamily. The cofactor is Mn(2+). Mg(2+) is required as a cofactor.

Its subcellular location is the cytoplasm. It catalyses the reaction Endonucleolytic cleavage to 5'-phosphomonoester.. Endonuclease that specifically degrades the RNA of RNA-DNA hybrids. The chain is Ribonuclease HIII from Bacillus cereus (strain ATCC 14579 / DSM 31 / CCUG 7414 / JCM 2152 / NBRC 15305 / NCIMB 9373 / NCTC 2599 / NRRL B-3711).